The following is a 412-amino-acid chain: MAQLDPKTINKIVLAYSGGLDTSIIARWLQETYDAEVITFTADIGQGEEVEPARAKAEAMGIKHIHIEDLREEFARDYVFPMFRANAIYEGEYLLGTSIARPLIAKRLVEIAKEHNADAISHGATGKGNDQVRFELGAVALSPDVVTIAPWREWDLSSRESLMEYAKEHNISIDYAGNKKKSPYSMDANLLHISYEGGILEDPYAEAEDDMWRWSVSPEQAPDVPQYLELEYAKGDIVAIDGEALKPYEVMIKLNEIGGKHGIGRLDIVENRYVGMKSRGCYETPAGTIMLKAHRGIESLTLDREAAHLKDELMPRYAKTIYNGYWFSPERMMLQALIDKSQEYVNGTVRVKLYKGAVSVVGRKSDDSLFDEKIATFEDDAGAYDQKDAEGFIRLNGLRLAIEASRGRDLSK.

ATP-binding positions include Ala15–Ser23 and Ala42. L-citrulline is bound by residues Tyr93 and Ser98. Gly123 provides a ligand contact to ATP. Thr125, Asn129, and Asp130 together coordinate L-aspartate. Asn129 contacts L-citrulline. Residues Arg133, Ser185, Ser194, Glu270, and Tyr282 each coordinate L-citrulline.

This sequence belongs to the argininosuccinate synthase family. Type 1 subfamily. As to quaternary structure, homotetramer.

It is found in the cytoplasm. The catalysed reaction is L-citrulline + L-aspartate + ATP = 2-(N(omega)-L-arginino)succinate + AMP + diphosphate + H(+). It participates in amino-acid biosynthesis; L-arginine biosynthesis; L-arginine from L-ornithine and carbamoyl phosphate: step 2/3. The protein is Argininosuccinate synthase of Psychrobacter arcticus (strain DSM 17307 / VKM B-2377 / 273-4).